Consider the following 350-residue polypeptide: Nicotinate-nucleotide--dimethylbenzimidazole phosphoribosyltransferase (350 aa).

Glu317 acts as the Proton acceptor in catalysis.

This sequence belongs to the CobT family.

The enzyme catalyses 5,6-dimethylbenzimidazole + nicotinate beta-D-ribonucleotide = alpha-ribazole 5'-phosphate + nicotinate + H(+). It participates in nucleoside biosynthesis; alpha-ribazole biosynthesis; alpha-ribazole from 5,6-dimethylbenzimidazole: step 1/2. Functionally, catalyzes the synthesis of alpha-ribazole-5'-phosphate from nicotinate mononucleotide (NAMN) and 5,6-dimethylbenzimidazole (DMB). The sequence is that of Nicotinate-nucleotide--dimethylbenzimidazole phosphoribosyltransferase from Shewanella sp. (strain W3-18-1).